Reading from the N-terminus, the 204-residue chain is Lysozyme g (204 aa).

A signal peptide spans 1–19 (MHLMLVLLGLAALLGTSQS). Cystine bridges form between Cys-23-Cys-79 and Cys-37-Cys-48. Catalysis depends on residues Glu-92 and Asp-105.

This sequence belongs to the glycosyl hydrolase 23 family.

The protein localises to the secreted. It catalyses the reaction Hydrolysis of (1-&gt;4)-beta-linkages between N-acetylmuramic acid and N-acetyl-D-glucosamine residues in a peptidoglycan and between N-acetyl-D-glucosamine residues in chitodextrins.. In terms of biological role, has bacteriolytic activity against M.luteus. This Struthio camelus (Common ostrich) protein is Lysozyme g.